The sequence spans 316 residues: CD276 antigen (316 aa).

The first 28 residues, 1 to 28 (MLRGWGGPSVGVCVRTALGVLCLCLTGA), serve as a signal peptide directing secretion. Residues 29–139 (VEVQVSEDPV…DSAAVSLQVA (111 aa)) form the Ig-like V-type domain. Topologically, residues 29-248 (VEVQVSEDPV…GQPLTFPPEA (220 aa)) are extracellular. Residues N104, N189, and N215 are each glycosylated (N-linked (GlcNAc...) asparagine). The region spanning 145–238 (PSMTLEPNKD…QDAHGSVTIT (94 aa)) is the Ig-like C2-type domain. The cysteines at positions 165 and 220 are disulfide-linked. Residues 249–269 (LWVTVGLSVCLVVLLVALAFV) form a helical membrane-spanning segment. At 270 to 316 (CWRKIKQSCEEENAGAEDQDGDGEGSKTALRPLKPSENKEDDGQEIA) the chain is on the cytoplasmic side. Residues 280 to 292 (EENAGAEDQDGDG) are compositionally biased toward acidic residues. The disordered stretch occupies residues 280–316 (EENAGAEDQDGDGEGSKTALRPLKPSENKEDDGQEIA).

Belongs to the immunoglobulin superfamily. BTN/MOG family. In terms of assembly, interacts with TREML2 and this interaction enhances T-cell activation. In terms of tissue distribution, ubiquitous.

The protein resides in the membrane. Its function is as follows. Modulates T-cell-mediated immune responses and the development of acute and chronic transplant rejection. Plays a positive regulatory role in bone formation and has a dual role in the bone-immune interface. Induces antitumor immunity as it activates both acquired and innate immunity leading to natural killer cell and CD8 T-cell dependent killing of tumor cells. The sequence is that of CD276 antigen (Cd276) from Mus musculus (Mouse).